Reading from the N-terminus, the 370-residue chain is Histidinol-phosphate aminotransferase 1 (370 aa).

At K222 the chain carries N6-(pyridoxal phosphate)lysine.

The protein belongs to the class-II pyridoxal-phosphate-dependent aminotransferase family. Histidinol-phosphate aminotransferase subfamily. Homodimer. Requires pyridoxal 5'-phosphate as cofactor.

It carries out the reaction L-histidinol phosphate + 2-oxoglutarate = 3-(imidazol-4-yl)-2-oxopropyl phosphate + L-glutamate. Its pathway is amino-acid biosynthesis; L-histidine biosynthesis; L-histidine from 5-phospho-alpha-D-ribose 1-diphosphate: step 7/9. The protein is Histidinol-phosphate aminotransferase 1 (hisC1) of Bacillus cereus (strain ATCC 14579 / DSM 31 / CCUG 7414 / JCM 2152 / NBRC 15305 / NCIMB 9373 / NCTC 2599 / NRRL B-3711).